Here is a 276-residue protein sequence, read N- to C-terminus: 3-methyl-2-oxobutanoate hydroxymethyltransferase (276 aa).

Mg(2+) is bound by residues D45 and D84. 3-methyl-2-oxobutanoate is bound by residues 45 to 46 (DS), D84, and K114. E116 serves as a coordination point for Mg(2+). E183 serves as the catalytic Proton acceptor.

This sequence belongs to the PanB family. As to quaternary structure, homodecamer; pentamer of dimers. Requires Mg(2+) as cofactor.

Its subcellular location is the cytoplasm. It catalyses the reaction 3-methyl-2-oxobutanoate + (6R)-5,10-methylene-5,6,7,8-tetrahydrofolate + H2O = 2-dehydropantoate + (6S)-5,6,7,8-tetrahydrofolate. It functions in the pathway cofactor biosynthesis; (R)-pantothenate biosynthesis; (R)-pantoate from 3-methyl-2-oxobutanoate: step 1/2. Catalyzes the reversible reaction in which hydroxymethyl group from 5,10-methylenetetrahydrofolate is transferred onto alpha-ketoisovalerate to form ketopantoate. The chain is 3-methyl-2-oxobutanoate hydroxymethyltransferase from Syntrophomonas wolfei subsp. wolfei (strain DSM 2245B / Goettingen).